A 225-amino-acid polypeptide reads, in one-letter code: Small ribosomal subunit protein eS1 (225 aa).

The protein belongs to the eukaryotic ribosomal protein eS1 family.

This chain is Small ribosomal subunit protein eS1, found in Methanococcus maripaludis (strain DSM 14266 / JCM 13030 / NBRC 101832 / S2 / LL).